Consider the following 487-residue polypeptide: Betaine aldehyde dehydrogenase (487 aa).

K(+) is bound by residues Ser-26, Ile-27, and Asp-93. 150–152 (GAW) contributes to the NAD(+) binding site. Lys-162 acts as the Charge relay system in catalysis. NAD(+) contacts are provided by residues 176–179 (KPSE) and 229–232 (SVPT). Leu-244 contributes to the K(+) binding site. Residue Glu-250 is the Proton acceptor of the active site. Residues Gly-252, Cys-284, and Glu-384 each coordinate NAD(+). Cys-284 functions as the Nucleophile in the catalytic mechanism. Cys-284 bears the Cysteine sulfenic acid (-SOH) mark. K(+) is bound by residues Lys-454 and Gly-457. Catalysis depends on Glu-461, which acts as the Charge relay system.

The protein belongs to the aldehyde dehydrogenase family. As to quaternary structure, dimer of dimers. Requires K(+) as cofactor.

It catalyses the reaction betaine aldehyde + NAD(+) + H2O = glycine betaine + NADH + 2 H(+). It participates in amine and polyamine biosynthesis; betaine biosynthesis via choline pathway; betaine from betaine aldehyde: step 1/1. Functionally, involved in the biosynthesis of the osmoprotectant glycine betaine. Catalyzes the irreversible oxidation of betaine aldehyde to the corresponding acid. The protein is Betaine aldehyde dehydrogenase of Sinorhizobium fredii (strain NBRC 101917 / NGR234).